The sequence spans 122 residues: Truncated CrmB protein (122 aa).

Functionally, the protein is truncated in this strain and presumably inactive. It has similarities with variola virus CrmB, but the product is inactivated due to several premature stop codons. The chain is Truncated CrmB protein (OPG002) from Bos taurus (Bovine).